The chain runs to 89 residues: Small ribosomal subunit protein uS15 (89 aa).

It belongs to the universal ribosomal protein uS15 family. As to quaternary structure, part of the 30S ribosomal subunit. Forms a bridge to the 50S subunit in the 70S ribosome, contacting the 23S rRNA.

One of the primary rRNA binding proteins, it binds directly to 16S rRNA where it helps nucleate assembly of the platform of the 30S subunit by binding and bridging several RNA helices of the 16S rRNA. Functionally, forms an intersubunit bridge (bridge B4) with the 23S rRNA of the 50S subunit in the ribosome. The sequence is that of Small ribosomal subunit protein uS15 from Gluconacetobacter diazotrophicus (strain ATCC 49037 / DSM 5601 / CCUG 37298 / CIP 103539 / LMG 7603 / PAl5).